A 354-amino-acid chain; its full sequence is Glutamine synthetase (354 aa).

A GS beta-grasp domain is found at 22-101 (VQAEYVWIDG…VLAETFNNDG (80 aa)). In terms of domain architecture, GS catalytic spans 108 to 354 (HRHHTKKVMD…IIVETTVLDK (247 aa)).

This sequence belongs to the glutamine synthetase family. Homooctamer.

The protein resides in the cytoplasm. The enzyme catalyses L-glutamate + NH4(+) + ATP = L-glutamine + ADP + phosphate + H(+). This is Glutamine synthetase (GLNA) from Suillus bovinus (Jersey cow bolete).